Reading from the N-terminus, the 180-residue chain is Cytidylate kinase (180 aa).

7–15 (GLPGSGTTT) contacts ATP.

Belongs to the cytidylate kinase family. Type 2 subfamily.

Its subcellular location is the cytoplasm. It catalyses the reaction CMP + ATP = CDP + ADP. The enzyme catalyses dCMP + ATP = dCDP + ADP. The protein is Cytidylate kinase of Methanosarcina acetivorans (strain ATCC 35395 / DSM 2834 / JCM 12185 / C2A).